We begin with the raw amino-acid sequence, 323 residues long: Aquaporin-4 (323 aa).

The Cytoplasmic segment spans residues 1–36; that stretch reads MSDRPAARRWGKCGPLCTRESIMVAFKGVWTQTFWK. 2 S-palmitoyl cysteine lipidation sites follow: cysteine 13 and cysteine 17. The chain crosses the membrane as a helical span at residues 37–57; sequence AVTAEFLAMLIFVLLSLGSTI. Residues 58 to 69 are Extracellular-facing; sequence NWGGAEKPLPVD. The helical transmembrane segment at 70–89 threads the bilayer; sequence MVLISLCFGLSIATMVQCFG. Residues 90–93 lie on the Cytoplasmic side of the membrane; sequence HISG. The discontinuously helical intramembrane region spans 94–101; it reads GHINPAVT. Positions 97–99 match the NPA 1 motif; sequence NPA. The Cytoplasmic segment spans residues 102 to 115; it reads VAMVCTRRISIAKS. A Phosphoserine; by PKG modification is found at serine 111. Residues 116–136 traverse the membrane as a helical segment; it reads VFYIAAQCLGAIIGAGILYLV. The Extracellular portion of the chain corresponds to 137 to 155; that stretch reads TPPSVVGGLGVTTVHGNLS. The N-linked (GlcNAc...) asparagine glycan is linked to asparagine 153. A helical transmembrane segment spans residues 156–176; that stretch reads AGHGLLVELIITFQLVFTIFA. The Cytoplasmic portion of the chain corresponds to 177 to 184; it reads SCDSKRTD. Phosphoserine; by PKC is present on serine 180. A helical membrane pass occupies residues 185–205; the sequence is VTGSIALAIGISVAIGHLFAI. Asparagine 206 carries an N-linked (GlcNAc...) asparagine glycan. The Extracellular segment spans residues 206 to 208; sequence NYT. The discontinuously helical intramembrane region spans 209–222; the sequence is GASMNPARSFGPAV. Positions 213-215 match the NPA 2 motif; the sequence is NPA. Residues 223-231 lie on the Extracellular side of the membrane; sequence IMGNWENHW. Residues 232 to 252 traverse the membrane as a helical segment; sequence IYWVGPIIGAVLAGGLYEYVF. At 253–323 the chain is on the cytoplasmic side; that stretch reads CPDVELKRRF…DPSGEVLSSV (71 aa). 2 positions are modified to phosphoserine: serine 276 and serine 285. Threonine 289 is subject to Phosphothreonine. A Phosphoserine modification is found at serine 321.

This sequence belongs to the MIP/aquaporin (TC 1.A.8) family. In terms of assembly, homotetramer. The tetramers can form oligomeric arrays in membranes. The size of the oligomers differs between tissues and is smaller in skeletal muscle than in brain. Interaction between AQP4 oligomeric arrays in close-by cells can contribute to cell-cell adhesion. Part of a complex containing MLC1, TRPV4, HEPACAM and ATP1B1. Post-translationally, phosphorylation by PKC at Ser-180 reduces conductance by 50%. Phosphorylation by PKG at Ser-111 in response to glutamate increases conductance by 40%. Isoform 2: Palmitoylated on its N-terminal region. Isoform 1: Not palmitoylated. Detected in brain and lung.

Its subcellular location is the cell membrane. It is found in the basolateral cell membrane. The protein resides in the endosome membrane. It localises to the sarcolemma. The protein localises to the cell projection. It carries out the reaction H2O(in) = H2O(out). Forms a water-specific channel. Plays an important role in brain water homeostasis and in glymphatic solute transport. Required for a normal rate of water exchange across the blood brain interface. Required for normal levels of cerebrospinal fluid influx into the brain cortex and parenchyma along paravascular spaces that surround penetrating arteries, and for normal drainage of interstitial fluid along paravenous drainage pathways. Thereby, it is required for normal clearance of solutes from the brain interstitial fluid, including soluble beta-amyloid peptides derived from APP. Plays a redundant role in urinary water homeostasis and urinary concentrating ability. In Bos taurus (Bovine), this protein is Aquaporin-4 (AQP4).